The following is an 875-amino-acid chain: Protein SEY1 (875 aa).

Residues 1-749 lie on the Cytoplasmic side of the membrane; that stretch reads MVANGHFASN…KRSAIGGITQ (749 aa). One can recognise a GB1/RHD3-type G domain in the interval 49–307; it reads GFNYHLISVF…IPADGFAVYA (259 aa). GTP is bound at residue 59–66; sequence GSQSTGKS. Positions 482-506 form a coiled coil; that stretch reads SNYQQELSLYQKDLERISGQLRRDE. The segment at 676 to 704 is disordered; the sequence is LDKWIGHTPSSATPADEEDLTPIGGVDED. The span at 690-704 shows a compositional bias: acidic residues; that stretch reads ADEEDLTPIGGVDED. A helical membrane pass occupies residues 750 to 770; that stretch reads VPLYFYGLLLALGWNEIMAVL. At 771–773 the chain is on the lumenal side; sequence RNP. A helical transmembrane segment spans residues 774-794; the sequence is AYFFLLFVCAIGAYVTYQLNL. At 795-875 the chain is on the cytoplasmic side; it reads WGPIIKMTEA…ADDDDVDDDF (81 aa). The tract at residues 831 to 875 is disordered; the sequence is MAMSGARNATEEHEMSNLNRKSGERGGQKYRGEDVADDDDVDDDF. The span at 839–864 shows a compositional bias: basic and acidic residues; it reads ATEEHEMSNLNRKSGERGGQKYRGED. Positions 865 to 875 are enriched in acidic residues; that stretch reads VADDDDVDDDF.

It belongs to the TRAFAC class dynamin-like GTPase superfamily. GB1/RHD3 GTPase family. RHD3 subfamily.

The protein resides in the endoplasmic reticulum membrane. In terms of biological role, cooperates with the reticulon proteins and tubule-shaping DP1 family proteins to generate and maintain the structure of the tubular endoplasmic reticulum network. Has GTPase activity, which is required for its function in ER organization. The protein is Protein SEY1 of Ajellomyces dermatitidis (strain ER-3 / ATCC MYA-2586) (Blastomyces dermatitidis).